The sequence spans 508 residues: 2,3-bisphosphoglycerate-independent phosphoglycerate mutase (508 aa).

Residues aspartate 13 and serine 63 each coordinate Mn(2+). The active-site Phosphoserine intermediate is the serine 63. Substrate-binding positions include histidine 122, 152-153 (RD), arginine 184, arginine 190, 256-259 (RADR), and lysine 330. Aspartate 397, histidine 401, aspartate 438, histidine 439, and histidine 457 together coordinate Mn(2+).

The protein belongs to the BPG-independent phosphoglycerate mutase family. Monomer. It depends on Mn(2+) as a cofactor.

It carries out the reaction (2R)-2-phosphoglycerate = (2R)-3-phosphoglycerate. Its pathway is carbohydrate degradation; glycolysis; pyruvate from D-glyceraldehyde 3-phosphate: step 3/5. Catalyzes the interconversion of 2-phosphoglycerate and 3-phosphoglycerate. The sequence is that of 2,3-bisphosphoglycerate-independent phosphoglycerate mutase from Laribacter hongkongensis (strain HLHK9).